Reading from the N-terminus, the 405-residue chain is 3-isopropylmalate dehydrogenase (405 aa).

86 to 104 (GAANTVWTTPDGRTDVRPE) lines the NAD(+) pocket. Residues Arg111, Arg121, Arg148, and Asp237 each coordinate substrate. The Mg(2+) site is built by Asp237, Asp262, and Asp266. 301-312 (GSAPDLGKQKVN) provides a ligand contact to NAD(+). The disordered stretch occupies residues 352–371 (ADIGGSSSTSEVGDLLPTRS).

Belongs to the isocitrate and isopropylmalate dehydrogenases family. In terms of assembly, homodimer. Mg(2+) serves as cofactor. Requires Mn(2+) as cofactor.

The protein resides in the cytoplasm. The catalysed reaction is (2R,3S)-3-isopropylmalate + NAD(+) = 4-methyl-2-oxopentanoate + CO2 + NADH. It participates in amino-acid biosynthesis; L-leucine biosynthesis; L-leucine from 3-methyl-2-oxobutanoate: step 3/4. Its function is as follows. Catalyzes the oxidation of 3-carboxy-2-hydroxy-4-methylpentanoate (3-isopropylmalate) to 3-carboxy-4-methyl-2-oxopentanoate. The product decarboxylates to 4-methyl-2 oxopentanoate. This is 3-isopropylmalate dehydrogenase (LEU2) from Yarrowia lipolytica (strain CLIB 122 / E 150) (Yeast).